We begin with the raw amino-acid sequence, 341 residues long: ATP-dependent 6-phosphofructokinase 2 (341 aa).

Residues glycine 10, 72–73, and 102–105 contribute to the ATP site; these read RL and GEGT. Glutamate 103 lines the Mg(2+) pocket. Residues 125–127, arginine 162, 169–171, glutamate 222, lysine 266, and 272–275 contribute to the substrate site; these read TID, MGR, and HVQR. Residue aspartate 127 is the Proton acceptor of the active site.

It belongs to the phosphofructokinase type A (PFKA) family. Mixed-substrate PFK group III subfamily. In terms of assembly, homodimer or homotetramer. It depends on Mg(2+) as a cofactor.

The protein resides in the cytoplasm. The catalysed reaction is beta-D-fructose 6-phosphate + ATP = beta-D-fructose 1,6-bisphosphate + ADP + H(+). The protein operates within carbohydrate degradation; glycolysis; D-glyceraldehyde 3-phosphate and glycerone phosphate from D-glucose: step 3/4. With respect to regulation, allosterically inhibited by phosphoenolpyruvate. Its function is as follows. Catalyzes the phosphorylation of D-fructose 6-phosphate to fructose 1,6-bisphosphate by ATP, the first committing step of glycolysis. The polypeptide is ATP-dependent 6-phosphofructokinase 2 (Streptomyces coelicolor (strain ATCC BAA-471 / A3(2) / M145)).